A 492-amino-acid polypeptide reads, in one-letter code: UDP-N-acetylmuramoyl-L-alanyl-D-glutamate--2,6-diaminopimelate ligase (492 aa).

Residue Ser-30 coordinates UDP-N-acetyl-alpha-D-muramoyl-L-alanyl-D-glutamate. 114–120 (GTNGKTS) contacts ATP. Residues 156-157 (TT), Ser-183, Gln-189, and Arg-191 contribute to the UDP-N-acetyl-alpha-D-muramoyl-L-alanyl-D-glutamate site. The residue at position 223 (Lys-223) is an N6-carboxylysine. Meso-2,6-diaminopimelate is bound by residues Arg-389, 413–416 (DNPR), Gly-462, and Glu-466. The Meso-diaminopimelate recognition motif signature appears at 413 to 416 (DNPR).

The protein belongs to the MurCDEF family. MurE subfamily. It depends on Mg(2+) as a cofactor. Carboxylation is probably crucial for Mg(2+) binding and, consequently, for the gamma-phosphate positioning of ATP.

It is found in the cytoplasm. It catalyses the reaction UDP-N-acetyl-alpha-D-muramoyl-L-alanyl-D-glutamate + meso-2,6-diaminopimelate + ATP = UDP-N-acetyl-alpha-D-muramoyl-L-alanyl-gamma-D-glutamyl-meso-2,6-diaminopimelate + ADP + phosphate + H(+). Its pathway is cell wall biogenesis; peptidoglycan biosynthesis. Catalyzes the addition of meso-diaminopimelic acid to the nucleotide precursor UDP-N-acetylmuramoyl-L-alanyl-D-glutamate (UMAG) in the biosynthesis of bacterial cell-wall peptidoglycan. The polypeptide is UDP-N-acetylmuramoyl-L-alanyl-D-glutamate--2,6-diaminopimelate ligase (Neisseria meningitidis serogroup A / serotype 4A (strain DSM 15465 / Z2491)).